The sequence spans 108 residues: MIPNPDPESSINRNQVIISGTITDLASPRYTPAGLMIAEFKLSHCSNQQEAGIQRRIEFEFEAIAIAETAEKIIRIGSGSNVEITGFIAKKNRLSNQLVLHVRDTRII.

Residues 11–108 form the SSB domain; sequence INRNQVIISG…VLHVRDTRII (98 aa).

Belongs to the PriB family. As to quaternary structure, homodimer. Interacts with PriA and DnaT. Component of the replication restart primosome. Primosome assembly occurs via a 'hand-off' mechanism. PriA binds to replication forks, subsequently PriB then DnaT bind; DnaT then displaces ssDNA to generate the helicase loading substrate.

In terms of biological role, involved in the restart of stalled replication forks, which reloads the replicative helicase on sites other than the origin of replication; the PriA-PriB pathway is the major replication restart pathway. During primosome assembly it facilitates complex formation between PriA and DnaT on DNA; stabilizes PriA on DNA. Stimulates the DNA unwinding activity of PriA helicase. The chain is Replication restart protein PriB from Nitrosomonas europaea (strain ATCC 19718 / CIP 103999 / KCTC 2705 / NBRC 14298).